The following is a 451-amino-acid chain: 2,4-dinitrotoluene dioxygenase system, large oxygenase component (451 aa).

Residues 42 to 126 (WLFLTHDSLI…LQSVPFEKEL (85 aa)) enclose the Rieske domain. [2Fe-2S] cluster contacts are provided by Cys84, His86, Cys104, and His107. 3 residues coordinate Fe cation: His211, His216, and Asp365.

This sequence belongs to the bacterial ring-hydroxylating dioxygenase alpha subunit family. In terms of assembly, the 2,4-dinitrotoluene dioxygenase (DNTDO) multicomponent enzyme system is composed of an electron transfer component and a dioxygenase component (iron sulfur protein (ISP)). The electron transfer component is composed of a ferredoxin reductase (DntAa) and a ferredoxin (DntAb), and the dioxygenase component is formed of a large alpha subunit (DntAc) and a small beta subunit (DntAd). The cofactor is [2Fe-2S] cluster. Requires Fe(2+) as cofactor.

The catalysed reaction is 2,4-dinitrotoluene + NADH + O2 = 4-methyl-5-nitrocatechol + nitrite + NAD(+). Component of the 2,4-dinitrotoluene dioxygenase (DNTDO) multicomponent enzyme system which catalyzes the incorporation of both atoms of molecular oxygen into 2,4-dinitrotoluene (DNT) to form 4-methyl-5-nitrocatechol (MNC) and nitrite. The alpha subunit has a catalytic role in the holoenzyme. Also able to convert naphthalene to cis-(1R,2S)-dihydroxy-1,2-dihydronaphthalene. The sequence is that of 2,4-dinitrotoluene dioxygenase system, large oxygenase component from Burkholderia sp. (strain RASC).